The following is a 219-amino-acid chain: Proteasome subunit beta type-9 (219 aa).

A propeptide spans 1-20 (MLRAGAPTAGSFRTKEVHTG) (removed in mature form). The active-site Nucleophile is Thr21. Lys53 and Lys109 each carry N6-acetyllysine.

The protein belongs to the peptidase T1B family. The 26S proteasome consists of a 20S proteasome core and two 19S regulatory subunits. The 20S proteasome core is composed of 28 subunits that are arranged in four stacked rings, resulting in a barrel-shaped structure. The two end rings are each formed by seven alpha subunits, and the two central rings are each formed by seven beta subunits. The catalytic chamber with the active sites is on the inside of the barrel. Component of the immunoproteasome, where it displaces the equivalent housekeeping subunit PSMB6. Component of the spermatoproteasome, a form of the proteasome specifically found in testis. Autocleaved. The resulting N-terminal Thr residue of the mature subunit is responsible for the nucleophile proteolytic activity.

It is found in the cytoplasm. The protein resides in the nucleus. It carries out the reaction Cleavage of peptide bonds with very broad specificity.. Its function is as follows. The proteasome is a multicatalytic proteinase complex which is characterized by its ability to cleave peptides with Arg, Phe, Tyr, Leu, and Glu adjacent to the leaving group at neutral or slightly basic pH. The proteasome has an ATP-dependent proteolytic activity. This subunit is involved in antigen processing to generate class I binding peptides. This Mus platythrix (Flat-haired mouse) protein is Proteasome subunit beta type-9 (Psmb9).